The sequence spans 370 residues: Homoserine kinase (370 aa).

A chloroplast-targeting transit peptide spans 1–34 (MASLCFQSPSKPISYFQPKSNPSPPLFAKVSVFR). 143 to 154 (LPLGSGLGSSAA) provides a ligand contact to ATP.

The protein belongs to the GHMP kinase family. Homoserine kinase subfamily.

Its subcellular location is the plastid. The protein resides in the chloroplast stroma. The catalysed reaction is L-homoserine + ATP = O-phospho-L-homoserine + ADP + H(+). Its pathway is amino-acid biosynthesis; L-threonine biosynthesis; L-threonine from L-aspartate: step 4/5. In terms of biological role, catalyzes the ATP-dependent phosphorylation of L-homoserine to L-homoserine phosphate. Is specific for L-homoserine and cannot use other substrates such D-serine, L-serine, D-threonine and L-threonine, galactose or D-homoserine in vitro. Required for susceptibility to the downy mildew pathogen Hyaloperonospora parasitica. The sequence is that of Homoserine kinase (HSK) from Arabidopsis thaliana (Mouse-ear cress).